A 476-amino-acid polypeptide reads, in one-letter code: Arginine biosynthesis bifunctional protein ArgJ, mitochondrial (476 aa).

Residues Thr-204, Lys-233, Thr-244, Glu-331, Asn-471, and Thr-476 each coordinate substrate. Thr-244 functions as the Nucleophile in the catalytic mechanism.

Belongs to the ArgJ family. In terms of assembly, heterodimer of an alpha and a beta chain. In terms of processing, the alpha and beta chains are autoproteolytically processed from a single precursor protein within the mitochondrion.

It localises to the mitochondrion matrix. It carries out the reaction N(2)-acetyl-L-ornithine + L-glutamate = N-acetyl-L-glutamate + L-ornithine. The enzyme catalyses L-glutamate + acetyl-CoA = N-acetyl-L-glutamate + CoA + H(+). Its pathway is amino-acid biosynthesis; L-arginine biosynthesis; L-ornithine and N-acetyl-L-glutamate from L-glutamate and N(2)-acetyl-L-ornithine (cyclic): step 1/1. It participates in amino-acid biosynthesis; L-arginine biosynthesis; N(2)-acetyl-L-ornithine from L-glutamate: step 1/4. Functionally, catalyzes two activities which are involved in the cyclic version of arginine biosynthesis: the synthesis of acetylglutamate from glutamate and acetyl-CoA, and of ornithine by transacetylation between acetylornithine and glutamate. This Arthroderma otae (strain ATCC MYA-4605 / CBS 113480) (Microsporum canis) protein is Arginine biosynthesis bifunctional protein ArgJ, mitochondrial.